A 357-amino-acid polypeptide reads, in one-letter code: Fructose-1,6-bisphosphatase class 1 2 (357 aa).

Mg(2+) is bound by residues glutamate 90, aspartate 112, leucine 114, and aspartate 115. Residues 115 to 118 (DGSS) and asparagine 206 contribute to the substrate site. Mg(2+) is bound at residue glutamate 278.

The protein belongs to the FBPase class 1 family. In terms of assembly, homotetramer. Mg(2+) is required as a cofactor.

It is found in the cytoplasm. The catalysed reaction is beta-D-fructose 1,6-bisphosphate + H2O = beta-D-fructose 6-phosphate + phosphate. Its pathway is carbohydrate biosynthesis; gluconeogenesis. This is Fructose-1,6-bisphosphatase class 1 2 from Dechloromonas aromatica (strain RCB).